The following is a 764-amino-acid chain: Phosphoribosylformylglycinamidine synthase subunit PurL (764 aa).

The interval 1–23 (MTQEVDTVERAAATPDHPQPYRE) is disordered. His-57 is an active-site residue. The ATP site is built by Tyr-60 and Lys-104. Glu-106 is a binding site for Mg(2+). Residues 107 to 110 (SHNH) and Arg-129 each bind substrate. Catalysis depends on His-108, which acts as the Proton acceptor. Asp-130 lines the Mg(2+) pocket. Gln-258 is a substrate binding site. Asp-286 is a binding site for Mg(2+). Residue 330–332 (ESQ) participates in substrate binding. ATP is bound by residues Asn-518 and Gly-555. Asn-556 serves as a coordination point for Mg(2+). Ser-558 lines the substrate pocket.

This sequence belongs to the FGAMS family. As to quaternary structure, monomer. Part of the FGAM synthase complex composed of 1 PurL, 1 PurQ and 2 PurS subunits.

It is found in the cytoplasm. It carries out the reaction N(2)-formyl-N(1)-(5-phospho-beta-D-ribosyl)glycinamide + L-glutamine + ATP + H2O = 2-formamido-N(1)-(5-O-phospho-beta-D-ribosyl)acetamidine + L-glutamate + ADP + phosphate + H(+). Its pathway is purine metabolism; IMP biosynthesis via de novo pathway; 5-amino-1-(5-phospho-D-ribosyl)imidazole from N(2)-formyl-N(1)-(5-phospho-D-ribosyl)glycinamide: step 1/2. Its function is as follows. Part of the phosphoribosylformylglycinamidine synthase complex involved in the purines biosynthetic pathway. Catalyzes the ATP-dependent conversion of formylglycinamide ribonucleotide (FGAR) and glutamine to yield formylglycinamidine ribonucleotide (FGAM) and glutamate. The FGAM synthase complex is composed of three subunits. PurQ produces an ammonia molecule by converting glutamine to glutamate. PurL transfers the ammonia molecule to FGAR to form FGAM in an ATP-dependent manner. PurS interacts with PurQ and PurL and is thought to assist in the transfer of the ammonia molecule from PurQ to PurL. The protein is Phosphoribosylformylglycinamidine synthase subunit PurL of Mycolicibacterium vanbaalenii (strain DSM 7251 / JCM 13017 / BCRC 16820 / KCTC 9966 / NRRL B-24157 / PYR-1) (Mycobacterium vanbaalenii).